We begin with the raw amino-acid sequence, 748 residues long: Glucans biosynthesis glucosyltransferase H (748 aa).

The next 7 membrane-spanning stretches (helical) occupy residues L85 to M107, F127 to L149, G443 to L465, A494 to I516, G529 to I551, L587 to L606, and L608 to S630.

It belongs to the glycosyltransferase 2 family. OpgH subfamily.

It is found in the cell inner membrane. Its pathway is glycan metabolism; osmoregulated periplasmic glucan (OPG) biosynthesis. Involved in the biosynthesis of osmoregulated periplasmic glucans (OPGs). This Bradyrhizobium diazoefficiens (strain JCM 10833 / BCRC 13528 / IAM 13628 / NBRC 14792 / USDA 110) protein is Glucans biosynthesis glucosyltransferase H.